The chain runs to 270 residues: Phosphatidate cytidylyltransferase (270 aa).

The next 7 membrane-spanning stretches (helical) occupy residues 19–39 (LWLTWVGGVGFTLFSIAIGLA), 53–73 (TAFSRLFGWAWLIVTGILLIL), 76–96 (GALLTIGFLVAGCAILLVTQW), 101–121 (GWPAAGLFYAGFSALSLSLLR), 126–146 (FGFTTIVFLFAVVWSTDIAAY), 183–203 (LVASLVAAPGGWGVPVLALLL), and 248–268 (ALLYLFGAIFAEPDVPSAIFF).

The protein belongs to the CDS family.

The protein resides in the cell inner membrane. It catalyses the reaction a 1,2-diacyl-sn-glycero-3-phosphate + CTP + H(+) = a CDP-1,2-diacyl-sn-glycerol + diphosphate. Its pathway is phospholipid metabolism; CDP-diacylglycerol biosynthesis; CDP-diacylglycerol from sn-glycerol 3-phosphate: step 3/3. The protein is Phosphatidate cytidylyltransferase (cdsA) of Brucella melitensis biotype 1 (strain ATCC 23456 / CCUG 17765 / NCTC 10094 / 16M).